Here is a 498-residue protein sequence, read N- to C-terminus: Sugar transport protein 2 (498 aa).

The Cytoplasmic portion of the chain corresponds to 1–22 (MAVGSMNVEEGTKAFPAKLTGQ). The next 12 helical transmembrane spans lie at 23–43 (VFLC…DIGI), 80–100 (LLQL…FISS), 117–137 (IFFL…MLIG), 140–160 (ILLG…ISEI), 167–187 (GGLN…ASYV), 200–220 (YSLG…FFIH), 288–308 (LQFF…PVLF), 320–340 (ISTV…LLVV), 348–368 (LLME…GILL), 381–401 (AVPL…AWSW), 421–441 (GYFC…QFFL), and 450–470 (LLFF…VFFL). Residues 471–498 (PETKGVPIEEMAEKRWKTHPRWKKYFKD) are Cytoplasmic-facing.

This sequence belongs to the major facilitator superfamily. Sugar transporter (TC 2.A.1.1) family. Pollen specific (at protein level).

The protein resides in the membrane. Its function is as follows. Mediates an active uptake of hexoses, probably by sugar/hydrogen symport. Can transport glucose, 3-O-methylglucose, xylose, mannose, fructose and galactose. This chain is Sugar transport protein 2 (STP2), found in Arabidopsis thaliana (Mouse-ear cress).